Consider the following 1755-residue polypeptide: Transposon Ty1-DR6 Gag-Pol polyprotein (1755 aa).

3 stretches are compositionally biased toward polar residues: residues 1 to 23, 48 to 60, and 127 to 152; these read MESQ…SVTS, TKAN…TPAS, and QSQF…GNTF. Disordered regions lie at residues 1–93, 126–174, and 352–421; these read MESQ…MMTQ, PQSQ…PPPM, and GSRN…SKST. The segment covering 153-165 has biased composition (low complexity); sequence TDSSSADSDMTST. Positions 299 to 401 are RNA-binding; sequence NNGIHINNKV…NSKSKTARAH (103 aa). Residues 402–418 show a composition bias toward low complexity; the sequence is NVSTSNNSPSTDNDSIS. Ser-416 is subject to Phosphoserine. Catalysis depends on Asp-461, which acts as the For protease activity; shared with dimeric partner. The tract at residues 583–640 is integrase-type zinc finger-like; it reads NVHTSESTRKYPYPFIHRMLAHANAQTIRYSLKNNTITYFNESDVDWSSAIDYQCPDC. One can recognise an Integrase catalytic domain in the interval 660–835; the sequence is NSYEPFQYLH…AGLDISTLLP (176 aa). Residues Asp-671 and Asp-736 each coordinate Mg(2+). Disordered stretches follow at residues 956 to 1087, 1092 to 1111, and 1130 to 1187; these read SKAV…ETEK, RSPS…NIVP, and DLPL…DNET. A compositionally biased stretch (low complexity) spans 960–969; sequence SPTDSTPPST. Residues 1005-1015 are compositionally biased toward polar residues; it reads STPQISNIEST. Residues 1038–1053 are compositionally biased toward basic and acidic residues; the sequence is ESSHASKSKDFRHSDS. 2 stretches are compositionally biased toward polar residues: residues 1054–1082 and 1101–1111; these read YSEN…QISD and PENNSSHNIVP. Residues 1178–1212 carry the Bipartite nuclear localization signal motif; the sequence is KKRSLEDNETEIKVSRDTWNTKNMRSLEPPRSKKR. The 139-residue stretch at 1338-1476 folds into the Reverse transcriptase Ty1/copia-type domain; sequence NNYYITQLDI…DILGLEIKYQ (139 aa). The Mg(2+) site is built by Asp-1346, Asp-1427, Asp-1428, Asp-1610, Glu-1652, and Asp-1685. One can recognise an RNase H Ty1/copia-type domain in the interval 1610 to 1752; that stretch reads DASYGNQPYY…IKTFKLLTNK (143 aa).

The capsid protein forms a homotrimer, from which the VLPs are assembled. The protease is a homodimer, whose active site consists of two apposed aspartic acid residues. In terms of processing, initially, virus-like particles (VLPs) are composed of the structural unprocessed proteins Gag and Gag-Pol, and also contain the host initiator methionine tRNA (tRNA(i)-Met) which serves as a primer for minus-strand DNA synthesis, and a dimer of genomic Ty RNA. Processing of the polyproteins occurs within the particle and proceeds by an ordered pathway, called maturation. First, the protease (PR) is released by autocatalytic cleavage of the Gag-Pol polyprotein yielding capsid protein p45 and a Pol-p154 precursor protein. This cleavage is a prerequisite for subsequent processing of Pol-p154 at the remaining sites to release the mature structural and catalytic proteins. Maturation takes place prior to the RT reaction and is required to produce transposition-competent VLPs.

The protein resides in the cytoplasm. It is found in the nucleus. The catalysed reaction is DNA(n) + a 2'-deoxyribonucleoside 5'-triphosphate = DNA(n+1) + diphosphate. It carries out the reaction Endonucleolytic cleavage to 5'-phosphomonoester.. Capsid protein (CA) is the structural component of the virus-like particle (VLP), forming the shell that encapsulates the retrotransposons dimeric RNA genome. The particles are assembled from trimer-clustered units and there are holes in the capsid shells that allow for the diffusion of macromolecules. CA also has nucleocapsid-like chaperone activity, promoting primer tRNA(i)-Met annealing to the multipartite primer-binding site (PBS), dimerization of Ty1 RNA and initiation of reverse transcription. In terms of biological role, the aspartyl protease (PR) mediates the proteolytic cleavages of the Gag and Gag-Pol polyproteins after assembly of the VLP. Functionally, reverse transcriptase/ribonuclease H (RT) is a multifunctional enzyme that catalyzes the conversion of the retro-elements RNA genome into dsDNA within the VLP. The enzyme displays a DNA polymerase activity that can copy either DNA or RNA templates, and a ribonuclease H (RNase H) activity that cleaves the RNA strand of RNA-DNA heteroduplexes during plus-strand synthesis and hydrolyzes RNA primers. The conversion leads to a linear dsDNA copy of the retrotransposon that includes long terminal repeats (LTRs) at both ends. Its function is as follows. Integrase (IN) targets the VLP to the nucleus, where a subparticle preintegration complex (PIC) containing at least integrase and the newly synthesized dsDNA copy of the retrotransposon must transit the nuclear membrane. Once in the nucleus, integrase performs the integration of the dsDNA into the host genome. The polypeptide is Transposon Ty1-DR6 Gag-Pol polyprotein (TY1B-DR6) (Saccharomyces cerevisiae (strain ATCC 204508 / S288c) (Baker's yeast)).